The chain runs to 674 residues: Enzymatic polyprotein (674 aa).

The interval 40–130 (IELHCFVDTG…CQLYEPFIQF (91 aa)) is protease. The active site involves Asp-47. The Reverse transcriptase domain occupies 267–447 (LKVIKPSKSP…KKINFLGLEI (181 aa)).

Belongs to the caulimoviridae enzymatic polyprotein family.

It carries out the reaction DNA(n) + a 2'-deoxyribonucleoside 5'-triphosphate = DNA(n+1) + diphosphate. Functionally, encodes for at least two polypeptides: protease (PR) and reverse transcriptase (RT). The protease processes the polyprotein in cis. Reverse transcriptase is multifunctional enzyme that converts the viral RNA genome into dsDNA in viral cytoplasmic capsids. This enzyme displays a DNA polymerase activity that can copy either DNA or RNA templates, and a ribonuclease H (RNase H) activity that cleaves the RNA strand of RNA-DNA heteroduplexes in a partially processive 3'- to 5'-endonucleasic mode. Neo-synthesized pregenomic RNA (pgRNA) are encapsidated, and reverse-transcribed inside the nucleocapsid. Partial (+)DNA is synthesized from the (-)DNA template and generates the relaxed circular DNA (RC-DNA) genome. After budding and infection, the RC-DNA migrates in the nucleus, and is converted into a plasmid-like covalently closed circular DNA (cccDNA). This Arabidopsis thaliana (Mouse-ear cress) protein is Enzymatic polyprotein.